We begin with the raw amino-acid sequence, 180 residues long: 3-deoxy-D-manno-octulosonate 8-phosphate phosphatase KdsC (180 aa).

Residues Asp14 and Asp16 each contribute to the Mg(2+) site. Substrate contacts are provided by residues Asp16, 37–41 (HVRDG), Lys45, Arg60, Arg68, and Lys84. Asp107 is a binding site for Mg(2+).

The protein belongs to the KdsC family. As to quaternary structure, homotetramer. It depends on Mg(2+) as a cofactor.

The catalysed reaction is 3-deoxy-alpha-D-manno-2-octulosonate-8-phosphate + H2O = 3-deoxy-alpha-D-manno-oct-2-ulosonate + phosphate. In terms of biological role, catalyzes the hydrolysis of 3-deoxy-D-manno-octulosonate 8-phosphate (KDO 8-P) to 3-deoxy-D-manno-octulosonate (KDO) and inorganic phosphate. The sequence is that of 3-deoxy-D-manno-octulosonate 8-phosphate phosphatase KdsC from Haemophilus influenzae (strain ATCC 51907 / DSM 11121 / KW20 / Rd).